The sequence spans 717 residues: Glycine--tRNA ligase beta subunit (717 aa).

The protein belongs to the class-II aminoacyl-tRNA synthetase family. Tetramer of two alpha and two beta subunits.

Its subcellular location is the cytoplasm. The catalysed reaction is tRNA(Gly) + glycine + ATP = glycyl-tRNA(Gly) + AMP + diphosphate. In Agrobacterium fabrum (strain C58 / ATCC 33970) (Agrobacterium tumefaciens (strain C58)), this protein is Glycine--tRNA ligase beta subunit.